The following is a 137-amino-acid chain: Peptide methionine sulfoxide reductase MsrB (137 aa).

The MsrB domain occupies 7-129; that stretch reads AEELKKKLSE…NSASLAFSDE (123 aa). Zn(2+) is bound by residues cysteine 46, cysteine 49, cysteine 95, and cysteine 98. The active-site Nucleophile is the cysteine 118.

Belongs to the MsrB Met sulfoxide reductase family. Zn(2+) serves as cofactor.

The enzyme catalyses L-methionyl-[protein] + [thioredoxin]-disulfide + H2O = L-methionyl-(R)-S-oxide-[protein] + [thioredoxin]-dithiol. The protein is Peptide methionine sulfoxide reductase MsrB of Salmonella dublin (strain CT_02021853).